Consider the following 351-residue polypeptide: Calcium homeostasis modulator 1 (351 aa).

Residues 1 to 20 (MDKFRMMFQFLQSNQESFMN) lie on the Cytoplasmic side of the membrane. The central pore stretch occupies residues 9-36 (QFLQSNQESFMNGICGIMALASAQMYSS). Residues 21-36 (GICGIMALASAQMYSS) form a helical membrane-spanning segment. The Extracellular segment spans residues 37 to 48 (FEFSCPCMPEYN). 2 disulfide bridges follow: Cys41–Cys126 and Cys43–Cys160. The chain crosses the membrane as a helical span at residues 49–71 (YTYGIGLLIIPPIWFFLLGFVLN). The tract at residues 62-69 (WFFLLGFV) is phospholipid-binding. The Cytoplasmic portion of the chain corresponds to 72 to 98 (NNVSVLAEEWKRPTGRRTKDPSVLRYM). A helical membrane pass occupies residues 99 to 124 (LCSITQRSLIAPAVWVSVTLMDGKSF). Residue Cys100 is the site of S-palmitoyl cysteine attachment. A phospholipid-binding region spans residues 104-116 (QRSLIAPAVWVSV). The Extracellular segment spans residues 125–177 (LCAFSINLDIEKFGNASLVIGMTETEKLKFLARIPCKDLFEDNEVRVAATRYI). N-linked (GlcNAc...) asparagine glycosylation occurs at Asn139. Residues 178-203 (KCISQACGWMFLLMMTFTAFLIRAIR) traverse the membrane as a helical segment. Residues 189-199 (LLMMTFTAFLI) are phospholipid-binding. Over 204–351 (PCFTQAAFLK…KEWAVYYSKV (148 aa)) the chain is Cytoplasmic. The S-palmitoyl cysteine moiety is linked to residue Cys205. A disordered region spans residues 259–281 (HRHQSKDTSDAEEEEKQRSDEDK). Residues 263-281 (SKDTSDAEEEEKQRSDEDK) are compositionally biased toward basic and acidic residues.

Belongs to the CALHM family. Oligomerizes to form hexamers and octamers. Does not form gap junctions. Associates with CALHM3 as a pore-forming subunit in a hetero-hexameric channel complex. In terms of processing, N-glycosylated. Palmitoylated.

The protein resides in the cell membrane. It is found in the endoplasmic reticulum membrane. It localises to the basolateral cell membrane. The enzyme catalyses ATP(in) = ATP(out). The catalysed reaction is Ca(2+)(in) = Ca(2+)(out). It catalyses the reaction Mg(2+)(in) = Mg(2+)(out). It carries out the reaction Na(+)(in) = Na(+)(out). The enzyme catalyses K(+)(in) = K(+)(out). The catalysed reaction is Li(+)(in) = Li(+)(out). It catalyses the reaction Rb(+)(in) = Rb(+)(out). It carries out the reaction Cs(+)(in) = Cs(+)(out). The enzyme catalyses chloride(in) = chloride(out). With respect to regulation, activated in response to membrane depolarization and low extracellular Ca(2+) concentration. Inhibited by ruthenium red. In terms of biological role, pore-forming subunit of a voltage-gated ion channel. Has poor ion selectivity and forms a wide pore that mediates permeation of small ions including Ca(2+), Na(+), K(+) and Cl(-), as well as larger ions such as ATP(4-). The sequence is that of Calcium homeostasis modulator 1 from Oryzias latipes (Japanese rice fish).